Consider the following 155-residue polypeptide: Endoribonuclease YbeY (155 aa).

His117, His121, and His127 together coordinate Zn(2+).

Belongs to the endoribonuclease YbeY family. It depends on Zn(2+) as a cofactor.

Its subcellular location is the cytoplasm. Functionally, single strand-specific metallo-endoribonuclease involved in late-stage 70S ribosome quality control and in maturation of the 3' terminus of the 16S rRNA. The sequence is that of Endoribonuclease YbeY from Psychrobacter cryohalolentis (strain ATCC BAA-1226 / DSM 17306 / VKM B-2378 / K5).